Reading from the N-terminus, the 187-residue chain is MKVSNLISTITIASALCLSLTNALVFSPCDKIQSLVKEYFDETIVDEMMCIAYNEAINPKSDSIGLWNLKKEHCNTVCKSICNSEIDLADIKLNTQCAEMVYLEFGFNGWDSYNNGLCKDSWGFCNTQNELRQHGSHSSTSRDSSSSSSRDSTGTGYSSSGSGTSGSGSNSGQTGHFIPGQSGHGLN.

Positions 1 to 23 are cleaved as a signal peptide; that stretch reads MKVSNLISTITIASALCLSLTNA. Disulfide bonds link Cys-50–Cys-125, Cys-74–Cys-82, and Cys-78–Cys-97. Glu-55 is an active-site residue. The tract at residues 133–187 is disordered; it reads QHGSHSSTSRDSSSSSSRDSTGTGYSSSGSGTSGSGSNSGQTGHFIPGQSGHGLN. The segment covering 136–175 has biased composition (low complexity); it reads SHSSTSRDSSSSSSRDSTGTGYSSSGSGTSGSGSNSGQTG.

Belongs to the glycosyl hydrolase 22 family.

This is Lysozyme C-like protein DDB_G0288143 from Dictyostelium discoideum (Social amoeba).